A 342-amino-acid polypeptide reads, in one-letter code: Dihydroorotate dehydrogenase (quinone) (342 aa).

Residues 60–64 (AGFDK) and T84 each bind FMN. K64 contacts substrate. 109–113 (NRMGF) provides a ligand contact to substrate. FMN-binding residues include N137 and N170. A substrate-binding site is contributed by N170. S173 serves as the catalytic Nucleophile. Residue N175 participates in substrate binding. FMN-binding residues include K215 and T243. 244-245 (NT) contacts substrate. FMN contacts are provided by residues G266, G295, and 316 to 317 (YT).

It belongs to the dihydroorotate dehydrogenase family. Type 2 subfamily. In terms of assembly, monomer. FMN is required as a cofactor.

The protein resides in the cell membrane. The catalysed reaction is (S)-dihydroorotate + a quinone = orotate + a quinol. It participates in pyrimidine metabolism; UMP biosynthesis via de novo pathway; orotate from (S)-dihydroorotate (quinone route): step 1/1. In terms of biological role, catalyzes the conversion of dihydroorotate to orotate with quinone as electron acceptor. This Halorhodospira halophila (strain DSM 244 / SL1) (Ectothiorhodospira halophila (strain DSM 244 / SL1)) protein is Dihydroorotate dehydrogenase (quinone).